Here is a 697-residue protein sequence, read N- to C-terminus: Sialidase B (697 aa).

Positions 1–29 (MNKRGLYSKLGISVVGISLLMGVPTLIHA) are cleaved as a signal peptide. R245 serves as a coordination point for substrate. D270 acts as the Proton acceptor in catalysis. 3 BNR repeats span residues 280–291 (SYSDDNGKTWSE), 462–473 (TTSQNRGESWEQ), and 517–528 (LISDDSGQTWKK). E541 is an active-site residue. R557 contacts substrate. The BNR 4 repeat unit spans residues 566-577 (MTSRDSGETWSK). R619 is a binding site for substrate. Residue Y653 is the Nucleophile of the active site.

Belongs to the glycosyl hydrolase 33 family.

It catalyses the reaction Hydrolysis of alpha-(2-&gt;3)-, alpha-(2-&gt;6)-, alpha-(2-&gt;8)- glycosidic linkages of terminal sialic acid residues in oligosaccharides, glycoproteins, glycolipids, colominic acid and synthetic substrates.. In Streptococcus pneumoniae serotype 4 (strain ATCC BAA-334 / TIGR4), this protein is Sialidase B (nanB).